Here is a 175-residue protein sequence, read N- to C-terminus: MSFVIAAPEAIAAAATDLASIGSTIGAANAAAAANTTAVLAAGADQVSVAIAAAFGAHGQAYQALSAQAATFHIQFVQALTAGAGSYAAAEAASAASITSPLLDAINAPFLAALGRPLIGNGADGAPGTGAAGGAGGLLFGNGGAGGSGAPGGAGGLLFGNGGAGGPGASGGALG.

One can recognise a PE domain in the interval 1–93 (MSFVIAAPEA…AGSYAAAEAA (93 aa)).

Belongs to the mycobacterial PE family. PGRS subfamily.

It is found in the secreted. The protein localises to the cell wall. The protein resides in the cell surface. The chain is PE-PGRS family protein PE_PGRS8 from Mycobacterium tuberculosis (strain ATCC 25618 / H37Rv).